The chain runs to 273 residues: Large ribosomal subunit protein uL2c (273 aa).

Residues 223-273 (MNPVDHPHGGGEGRAPIGRKKPTTPWGYPALGRRSRKRNKYSDSFILRRRK) form a disordered region.

The protein belongs to the universal ribosomal protein uL2 family. In terms of assembly, part of the 50S ribosomal subunit.

It localises to the plastid. The protein resides in the chloroplast. This is Large ribosomal subunit protein uL2c (rpl2) from Calycanthus floridus var. glaucus (Eastern sweetshrub).